A 202-amino-acid polypeptide reads, in one-letter code: Proteasome subunit beta 1 (202 aa).

Met1 is a propeptide (removed in mature form; by autocatalysis). Thr2 (nucleophile) is an active-site residue.

It belongs to the peptidase T1B family. In terms of assembly, the 20S proteasome core is composed of 14 alpha and 14 beta subunits that assemble into four stacked heptameric rings, resulting in a barrel-shaped structure. The two inner rings, each composed of seven catalytic beta subunits, are sandwiched by two outer rings, each composed of seven alpha subunits. The catalytic chamber with the active sites is on the inside of the barrel. Has a gated structure, the ends of the cylinder being occluded by the N-termini of the alpha-subunits. Is capped at one or both ends by the proteasome regulatory ATPase, PAN.

Its subcellular location is the cytoplasm. It catalyses the reaction Cleavage of peptide bonds with very broad specificity.. With respect to regulation, the formation of the proteasomal ATPase PAN-20S proteasome complex, via the docking of the C-termini of PAN into the intersubunit pockets in the alpha-rings, triggers opening of the gate for substrate entry. Interconversion between the open-gate and close-gate conformations leads to a dynamic regulation of the 20S proteasome proteolysis activity. Component of the proteasome core, a large protease complex with broad specificity involved in protein degradation. The protein is Proteasome subunit beta 1 of Pyrobaculum aerophilum (strain ATCC 51768 / DSM 7523 / JCM 9630 / CIP 104966 / NBRC 100827 / IM2).